We begin with the raw amino-acid sequence, 219 residues long: Ribose-5-phosphate isomerase A (219 aa).

Substrate is bound by residues 28–31, 81–84, and 94–97; these read SGST, DGAD, and KGGG. The active-site Proton acceptor is the Glu-103. A substrate-binding site is contributed by Lys-121.

It belongs to the ribose 5-phosphate isomerase family. As to quaternary structure, homodimer.

It carries out the reaction aldehydo-D-ribose 5-phosphate = D-ribulose 5-phosphate. Its pathway is carbohydrate degradation; pentose phosphate pathway; D-ribose 5-phosphate from D-ribulose 5-phosphate (non-oxidative stage): step 1/1. Its function is as follows. Catalyzes the reversible conversion of ribose-5-phosphate to ribulose 5-phosphate. The chain is Ribose-5-phosphate isomerase A from Pasteurella multocida (strain Pm70).